A 134-amino-acid polypeptide reads, in one-letter code: Putative nickel-responsive regulator (134 aa).

The Ni(2+) site is built by H78, H89, H91, and C97.

The protein belongs to the transcriptional regulatory CopG/NikR family. It depends on Ni(2+) as a cofactor.

Transcriptional regulator. The polypeptide is Putative nickel-responsive regulator (Chlorobium phaeobacteroides (strain DSM 266 / SMG 266 / 2430)).